The primary structure comprises 735 residues: Phosphoribosylformylglycinamidine synthase subunit PurL (735 aa).

The active site involves His44. ATP is bound by residues Tyr47 and Lys86. Glu88 provides a ligand contact to Mg(2+). Residues Ser89 to His92 and Arg111 each bind substrate. Residue His90 is the Proton acceptor of the active site. Asp112 contributes to the Mg(2+) binding site. Position 240 (Gln240) interacts with substrate. Residue Asp268 coordinates Mg(2+). Glu312 to Gln314 contributes to the substrate binding site. Residues Asp496 and Gly533 each contribute to the ATP site. Residue Asn534 participates in Mg(2+) binding. Ser536 is a substrate binding site.

Belongs to the FGAMS family. Monomer. Part of the FGAM synthase complex composed of 1 PurL, 1 PurQ and 2 PurS subunits.

Its subcellular location is the cytoplasm. It carries out the reaction N(2)-formyl-N(1)-(5-phospho-beta-D-ribosyl)glycinamide + L-glutamine + ATP + H2O = 2-formamido-N(1)-(5-O-phospho-beta-D-ribosyl)acetamidine + L-glutamate + ADP + phosphate + H(+). It functions in the pathway purine metabolism; IMP biosynthesis via de novo pathway; 5-amino-1-(5-phospho-D-ribosyl)imidazole from N(2)-formyl-N(1)-(5-phospho-D-ribosyl)glycinamide: step 1/2. Functionally, part of the phosphoribosylformylglycinamidine synthase complex involved in the purines biosynthetic pathway. Catalyzes the ATP-dependent conversion of formylglycinamide ribonucleotide (FGAR) and glutamine to yield formylglycinamidine ribonucleotide (FGAM) and glutamate. The FGAM synthase complex is composed of three subunits. PurQ produces an ammonia molecule by converting glutamine to glutamate. PurL transfers the ammonia molecule to FGAR to form FGAM in an ATP-dependent manner. PurS interacts with PurQ and PurL and is thought to assist in the transfer of the ammonia molecule from PurQ to PurL. This is Phosphoribosylformylglycinamidine synthase subunit PurL from Nitratiruptor sp. (strain SB155-2).